Reading from the N-terminus, the 104-residue chain is L-rhamnose mutarotase (104 aa).

Tyr-18 lines the substrate pocket. Residue His-22 is the Proton donor of the active site. Residues Tyr-41 and 76 to 77 contribute to the substrate site; that span reads WW.

This sequence belongs to the rhamnose mutarotase family. As to quaternary structure, homodimer.

Its subcellular location is the cytoplasm. It catalyses the reaction alpha-L-rhamnose = beta-L-rhamnose. It participates in carbohydrate metabolism; L-rhamnose metabolism. Functionally, involved in the anomeric conversion of L-rhamnose. The protein is L-rhamnose mutarotase of Klebsiella pneumoniae (strain 342).